The following is a 160-amino-acid chain: NADH-quinone oxidoreductase subunit I (160 aa).

4Fe-4S ferredoxin-type domains lie at 51–80 and 91–120; these read RRYKNGEERCIACKLCEVVCPAQAITIEAA and TKYDIDMTKCIYCGFCQEACPVDAIVEGPN. 8 residues coordinate [4Fe-4S] cluster: cysteine 60, cysteine 63, cysteine 66, cysteine 70, cysteine 100, cysteine 103, cysteine 106, and cysteine 110.

Belongs to the complex I 23 kDa subunit family. As to quaternary structure, NDH-1 is composed of 14 different subunits. Subunits NuoA, H, J, K, L, M, N constitute the membrane sector of the complex. [4Fe-4S] cluster is required as a cofactor.

It is found in the cell inner membrane. The enzyme catalyses a quinone + NADH + 5 H(+)(in) = a quinol + NAD(+) + 4 H(+)(out). Its function is as follows. NDH-1 shuttles electrons from NADH, via FMN and iron-sulfur (Fe-S) centers, to quinones in the respiratory chain. The immediate electron acceptor for the enzyme in this species is believed to be ubiquinone. Couples the redox reaction to proton translocation (for every two electrons transferred, four hydrogen ions are translocated across the cytoplasmic membrane), and thus conserves the redox energy in a proton gradient. In Neorickettsia sennetsu (strain ATCC VR-367 / Miyayama) (Ehrlichia sennetsu), this protein is NADH-quinone oxidoreductase subunit I.